A 269-amino-acid polypeptide reads, in one-letter code: Phosphoribosylformylglycinamidine synthase subunit PurQ (269 aa).

Residues 5 to 262 (VLVMSGYGIN…IESNLQIFKN (258 aa)) form the Glutamine amidotransferase type-1 domain. C95 serves as the catalytic Nucleophile. Catalysis depends on residues H222, E224, and E232.

In terms of assembly, part of the FGAM synthase complex composed of 1 PurL, 1 PurQ and 2 PurS subunits.

The protein resides in the cytoplasm. It catalyses the reaction N(2)-formyl-N(1)-(5-phospho-beta-D-ribosyl)glycinamide + L-glutamine + ATP + H2O = 2-formamido-N(1)-(5-O-phospho-beta-D-ribosyl)acetamidine + L-glutamate + ADP + phosphate + H(+). The enzyme catalyses L-glutamine + H2O = L-glutamate + NH4(+). It participates in purine metabolism; IMP biosynthesis via de novo pathway; 5-amino-1-(5-phospho-D-ribosyl)imidazole from N(2)-formyl-N(1)-(5-phospho-D-ribosyl)glycinamide: step 1/2. Part of the phosphoribosylformylglycinamidine synthase complex involved in the purines biosynthetic pathway. Catalyzes the ATP-dependent conversion of formylglycinamide ribonucleotide (FGAR) and glutamine to yield formylglycinamidine ribonucleotide (FGAM) and glutamate. The FGAM synthase complex is composed of three subunits. PurQ produces an ammonia molecule by converting glutamine to glutamate. PurL transfers the ammonia molecule to FGAR to form FGAM in an ATP-dependent manner. PurS interacts with PurQ and PurL and is thought to assist in the transfer of the ammonia molecule from PurQ to PurL. In Methanococcus maripaludis (strain C5 / ATCC BAA-1333), this protein is Phosphoribosylformylglycinamidine synthase subunit PurQ.